Consider the following 248-residue polypeptide: UDP-2,3-diacylglucosamine hydrolase (248 aa).

5 residues coordinate Mn(2+): Asp7, His9, Asp40, Asn78, and His113. 78–79 (NR) serves as a coordination point for substrate. Positions 121, 159, 163, 166, and 194 each coordinate substrate. Residues His194 and His196 each coordinate Mn(2+).

It belongs to the LpxH family. It depends on Mn(2+) as a cofactor.

It localises to the cell inner membrane. The enzyme catalyses UDP-2-N,3-O-bis[(3R)-3-hydroxytetradecanoyl]-alpha-D-glucosamine + H2O = 2-N,3-O-bis[(3R)-3-hydroxytetradecanoyl]-alpha-D-glucosaminyl 1-phosphate + UMP + 2 H(+). It functions in the pathway glycolipid biosynthesis; lipid IV(A) biosynthesis; lipid IV(A) from (3R)-3-hydroxytetradecanoyl-[acyl-carrier-protein] and UDP-N-acetyl-alpha-D-glucosamine: step 4/6. Hydrolyzes the pyrophosphate bond of UDP-2,3-diacylglucosamine to yield 2,3-diacylglucosamine 1-phosphate (lipid X) and UMP by catalyzing the attack of water at the alpha-P atom. Involved in the biosynthesis of lipid A, a phosphorylated glycolipid that anchors the lipopolysaccharide to the outer membrane of the cell. In Pseudomonas fluorescens (strain Pf0-1), this protein is UDP-2,3-diacylglucosamine hydrolase.